An 866-amino-acid chain; its full sequence is Probable outer membrane usher protein ElfC (866 aa).

Residues 1–35 form the signal peptide; it reads MYRTHRQHSLLSSGGVPSFIGGLVVFVSAAFNAQA.

It belongs to the fimbrial export usher family.

It is found in the cell outer membrane. In terms of biological role, part of the elfADCG fimbrial operon, which could be required for adherence to host epithelial cells. Could be involved in the export and assembly of the ElfA fimbrial subunits across the outer membrane. The polypeptide is Probable outer membrane usher protein ElfC (elfC) (Escherichia coli O157:H7).